Here is a 204-residue protein sequence, read N- to C-terminus: Protein-L-isoaspartate O-methyltransferase (204 aa).

This sequence belongs to the methyltransferase superfamily. L-isoaspartyl/D-aspartyl protein methyltransferase family. In terms of assembly, monomer.

It is found in the cytoplasm. It carries out the reaction [protein]-L-isoaspartate + S-adenosyl-L-methionine = [protein]-L-isoaspartate alpha-methyl ester + S-adenosyl-L-homocysteine. Catalyzes the methyl esterification of L-isoaspartyl residues in peptides and proteins that result from spontaneous decomposition of normal L-aspartyl and L-asparaginyl residues. It plays a role in the repair and/or degradation of damaged proteins. In Rhizobium meliloti (strain 1021) (Ensifer meliloti), this protein is Protein-L-isoaspartate O-methyltransferase (pcm).